Reading from the N-terminus, the 232-residue chain is Protein lin-7 homolog A (232 aa).

A Kinase interacting site motif is present at residues Met-14–Asp-28. An L27 domain is found at Leu-25 to Gly-80. Positions Val-108 to Pro-190 constitute a PDZ domain.

It belongs to the lin-7 family. As to quaternary structure, forms a complex with CASK and CASKIN1. Component of the brain-specific heterotrimeric complex (LIN-10-LIN-2-LIN-7 complex) composed of at least APBA1, CASK, and LIN7, which associates with the motor protein KIF17 to transport vesicles along microtubules. Can also interact with other modular proteins containing protein-protein interaction domains like PALS1, PALS2, MPP7, DLG1, DLG2 and DLG3 through its L27 domain. Interacts with DLG4 and GRIN2B as well as CDH1 and CTNNB1, the channels KCNJ12/Kir2.2, KCNJ4/Kir2.3 and probably KCNJ2/Kir2.1 and SLC6A12/BGT-1 via its PDZ domain. The association of LIN7A with cadherin and beta-catenin is calcium-dependent, occurs at synaptic junctions and requires the actin cytoskeleton. Interacts with EGFR, ERBB2, ERBB3 and ERBB4 with both PDZ and KID domains. Associates with KIF17 via APBA1. Interacts with HTR4. Forms a tripartite complex composed of DLG1, MPP7 and LIN7 (LIN7A or LIN7C). Interacts with MARCHF11. Ubiquitously expressed in brain and detected in lung, liver and testis (at protein level). Expression was detected only in brain.

The protein resides in the cell membrane. The protein localises to the basolateral cell membrane. It localises to the cell junction. Its subcellular location is the postsynaptic density membrane. It is found in the tight junction. In terms of biological role, plays a role in establishing and maintaining the asymmetric distribution of channels and receptors at the plasma membrane of polarized cells. Forms membrane-associated multiprotein complexes that may regulate delivery and recycling of proteins to the correct membrane domains. The tripartite complex composed of LIN7 (LIN7A, LIN7B or LIN7C), CASK and APBA1 associates with the motor protein KIF17 to transport vesicles containing N-methyl-D-aspartate (NMDA) receptor subunit NR2B along microtubules. This complex may have the potential to couple synaptic vesicle exocytosis to cell adhesion in brain. Ensures the proper localization of GRIN2B (subunit 2B of the NMDA receptor) to neuronal postsynaptic density and may function in localizing synaptic vesicles at synapses where it is recruited by beta-catenin and cadherin. Required to localize Kir2 channels, GABA transporter (SLC6A12) and EGFR/ERBB1, ERBB2, ERBB3 and ERBB4 to the basolateral membrane of epithelial cells. The sequence is that of Protein lin-7 homolog A (Lin7a) from Rattus norvegicus (Rat).